The following is a 99-amino-acid chain: METLTFQFPAAEPGRGRTLVGCVSSGDLEVLMEPGTAGSLNIQVVTSVNGSGARWEQLFQRLFQGRTWPAVNIDIHDFGATPGVVRLRLEQGFEEIAHD.

An O-(phosphoribosyl dephospho-coenzyme A)serine modification is found at S25.

This sequence belongs to the MdcC family. In terms of processing, covalently binds the prosthetic group of malonate decarboxylase.

It localises to the cytoplasm. Its function is as follows. Subunit of malonate decarboxylase, it is an acyl carrier protein to which acetyl and malonyl thioester residues are bound via a 2'-(5''-phosphoribosyl)-3'-dephospho-CoA prosthetic group and turn over during the catalytic mechanism. This Pseudomonas putida (strain W619) protein is Malonate decarboxylase acyl carrier protein.